Consider the following 160-residue polypeptide: Probable small nuclear ribonucleoprotein-associated protein B (160 aa).

Residues 4 to 86 (SKNNKMMAHL…IVSMTVDGPP (83 aa)) form the Sm domain. The segment at 80-160 (MTVDGPPPRD…YGGPPGGRPF (81 aa)) is disordered. Composition is skewed to gly residues over residues 99–113 (GGAG…GGRG), 128–143 (APGG…GGPG), and 150–160 (GYGGPPGGRPF).

The protein belongs to the snRNP SmB/SmN family.

The protein resides in the nucleus. Its subcellular location is the cytoplasm. The protein localises to the cytosol. In terms of biological role, plays a role in pre-mRNA splicing as a core component of the spliceosomal U1, U2, U4 and U5 small nuclear ribonucleoproteins (snRNPs), the building blocks of the spliceosome. The polypeptide is Probable small nuclear ribonucleoprotein-associated protein B (snr-2) (Caenorhabditis elegans).